Reading from the N-terminus, the 202-residue chain is Peptidyl-tRNA hydrolase (202 aa).

Residue Y16 participates in tRNA binding. Catalysis depends on H21, which acts as the Proton acceptor. Residues Y68, N70, and N116 each coordinate tRNA.

This sequence belongs to the PTH family. In terms of assembly, monomer.

Its subcellular location is the cytoplasm. It catalyses the reaction an N-acyl-L-alpha-aminoacyl-tRNA + H2O = an N-acyl-L-amino acid + a tRNA + H(+). In terms of biological role, hydrolyzes ribosome-free peptidyl-tRNAs (with 1 or more amino acids incorporated), which drop off the ribosome during protein synthesis, or as a result of ribosome stalling. Catalyzes the release of premature peptidyl moieties from peptidyl-tRNA molecules trapped in stalled 50S ribosomal subunits, and thus maintains levels of free tRNAs and 50S ribosomes. The polypeptide is Peptidyl-tRNA hydrolase (Treponema pallidum (strain Nichols)).